A 477-amino-acid polypeptide reads, in one-letter code: Glycogen synthase (477 aa).

K15 provides a ligand contact to ADP-alpha-D-glucose.

Belongs to the glycosyltransferase 1 family. Bacterial/plant glycogen synthase subfamily.

The enzyme catalyses [(1-&gt;4)-alpha-D-glucosyl](n) + ADP-alpha-D-glucose = [(1-&gt;4)-alpha-D-glucosyl](n+1) + ADP + H(+). It functions in the pathway glycan biosynthesis; glycogen biosynthesis. In terms of biological role, synthesizes alpha-1,4-glucan chains using ADP-glucose. The sequence is that of Glycogen synthase from Glaesserella parasuis serovar 5 (strain SH0165) (Haemophilus parasuis).